The sequence spans 212 residues: Large ribosomal subunit protein mL48 (212 aa).

A mitochondrion-targeting transit peptide spans 1 to 28 (MSGTLEKVLCLRNNTIFKQAFSLLRFRT). N6-succinyllysine is present on Lys-199.

The protein belongs to the mitochondrion-specific ribosomal protein mL48 family. Component of the mitochondrial large ribosomal subunit (mt-LSU). Mature mammalian 55S mitochondrial ribosomes consist of a small (28S) and a large (39S) subunit. The 28S small subunit contains a 12S ribosomal RNA (12S mt-rRNA) and 30 different proteins. The 39S large subunit contains a 16S rRNA (16S mt-rRNA), a copy of mitochondrial valine transfer RNA (mt-tRNA(Val)), which plays an integral structural role, and 52 different proteins. mL48 is located at the central protuberance. Interacts with OXA1L.

The protein resides in the mitochondrion. In Homo sapiens (Human), this protein is Large ribosomal subunit protein mL48 (MRPL48).